The chain runs to 147 residues: Large ribosomal subunit protein uL15 (147 aa).

The segment covering 1–11 has biased composition (basic and acidic residues); sequence MKLHDLRPAKD. The disordered stretch occupies residues 1–57; the sequence is MKLHDLRPAKDAKKKRKRVGRGTGSGRGFTSGRGSKGQNARSGGGVRPTFEGGQTPL. A compositionally biased stretch (gly residues) spans 21–35; it reads RGTGSGRGFTSGRGS.

The protein belongs to the universal ribosomal protein uL15 family. Part of the 50S ribosomal subunit.

In terms of biological role, binds to the 23S rRNA. This chain is Large ribosomal subunit protein uL15, found in Halothermothrix orenii (strain H 168 / OCM 544 / DSM 9562).